Consider the following 393-residue polypeptide: Lipoyl synthase, mitochondrial (393 aa).

[4Fe-4S] cluster is bound by residues Cys115, Cys120, Cys126, Cys146, Cys150, Cys153, and Ser362. The Radical SAM core domain maps to 131-351; the sequence is ETGTATATIM…RILGMDMGFR (221 aa).

The protein belongs to the radical SAM superfamily. Lipoyl synthase family. [4Fe-4S] cluster serves as cofactor.

The protein localises to the mitochondrion. The enzyme catalyses [[Fe-S] cluster scaffold protein carrying a second [4Fe-4S](2+) cluster] + N(6)-octanoyl-L-lysyl-[protein] + 2 oxidized [2Fe-2S]-[ferredoxin] + 2 S-adenosyl-L-methionine + 4 H(+) = [[Fe-S] cluster scaffold protein] + N(6)-[(R)-dihydrolipoyl]-L-lysyl-[protein] + 4 Fe(3+) + 2 hydrogen sulfide + 2 5'-deoxyadenosine + 2 L-methionine + 2 reduced [2Fe-2S]-[ferredoxin]. Its pathway is protein modification; protein lipoylation via endogenous pathway; protein N(6)-(lipoyl)lysine from octanoyl-[acyl-carrier-protein]: step 2/2. Functionally, catalyzes the radical-mediated insertion of two sulfur atoms into the C-6 and C-8 positions of the octanoyl moiety bound to the lipoyl domains of lipoate-dependent enzymes, thereby converting the octanoylated domains into lipoylated derivatives. In Vitis vinifera (Grape), this protein is Lipoyl synthase, mitochondrial.